The following is a 358-amino-acid chain: Septin-12 (358 aa).

Residues 1–25 (MDPLRRSPSPCLSSQPSSPSTPPCE) are disordered. The span at 6–18 (RSPSPCLSSQPSS) shows a compositional bias: low complexity. The Septin-type G domain maps to 46–317 (MGFEFNIMVV…ENYRVIRLNE (272 aa)). The segment at 46-319 (MGFEFNIMVV…YRVIRLNESH (274 aa)) is interaction with SEPTIN7. The segment at 56 to 63 (GQSGLGKS) is G1 motif. Residues 56–63 (GQSGLGKS), Thr-89, Gly-115, 195–203 (RADSLTMEE), Gly-251, and Arg-266 contribute to the GTP site. The interval 112 to 115 (DTPG) is G3 motif. The segment at 194-197 (ARAD) is G4 motif. The segment at 258-358 (VNGRCVLGRK…GAHDDSDDEF (101 aa)) is self-association (via N-terminus) to polymerize octameric septin 12-7-6-2/4-2/4-6-7-12 filaments.

It belongs to the TRAFAC class TrmE-Era-EngA-EngB-Septin-like GTPase superfamily. Septin GTPase family. In terms of assembly, septins polymerize into heterooligomeric protein complexes that form filaments, and can associate with cellular membranes, actin filaments and microtubules. GTPase activity is required for filament formation. Interacts with SEPTIN6 and SEPTIN11. Self-associates. Component of a septin core octameric complex consisting of SEPTIN12, SEPTIN7, SEPTIN6 and SEPTIN2 or SEPTIN4 in the order 12-7-6-2-2-6-7-12 or 12-7-6-4-4-6-7-12 and located in the sperm annulus; the octamer polymerizes into filaments via the SEPTIN12 N- and C-termini; the SEPTIN12:SEPTIN7 association is mediated by the respective GTP-binding domains. Interacts with SPAG4 and LMNB1. Associates with alpha- and beta-tubulins. As to expression, widely expressed. Expressed in lymph node.

It is found in the cytoplasm. It localises to the cytoskeleton. The protein resides in the spindle. Its subcellular location is the nucleus. The protein localises to the cell projection. It is found in the cilium. It localises to the flagellum. Filament-forming cytoskeletal GTPase. Involved in spermatogenesis. Involved in the morphogenesis of sperm heads and the elongation of sperm tails probably implicating the association with alpha- and beta-tubulins. Forms a filamentous structure with SEPTIN7, SEPTIN6, SEPTIN2 and probably SEPTIN4 at the sperm annulus which is required for the structural integrity and motility of the sperm tail during postmeiotic differentiation. May play a role in cytokinesis (Potential). The sequence is that of Septin-12 from Homo sapiens (Human).